We begin with the raw amino-acid sequence, 393 residues long: Formate-dependent phosphoribosylglycinamide formyltransferase (393 aa).

Residues Glu-22–Leu-23 and Glu-82 contribute to the N(1)-(5-phospho-beta-D-ribosyl)glycinamide site. ATP is bound by residues Arg-114, Lys-155, Ser-160–Gln-165, Glu-195–Ile-198, and Glu-203. The ATP-grasp domain occupies Arg-119–Leu-308. Mg(2+) is bound by residues Glu-267 and Glu-279. N(1)-(5-phospho-beta-D-ribosyl)glycinamide-binding positions include Asp-286, Lys-356, and Arg-363 to Arg-364.

This sequence belongs to the PurK/PurT family. In terms of assembly, homodimer.

It catalyses the reaction N(1)-(5-phospho-beta-D-ribosyl)glycinamide + formate + ATP = N(2)-formyl-N(1)-(5-phospho-beta-D-ribosyl)glycinamide + ADP + phosphate + H(+). Its pathway is purine metabolism; IMP biosynthesis via de novo pathway; N(2)-formyl-N(1)-(5-phospho-D-ribosyl)glycinamide from N(1)-(5-phospho-D-ribosyl)glycinamide (formate route): step 1/1. In terms of biological role, involved in the de novo purine biosynthesis. Catalyzes the transfer of formate to 5-phospho-ribosyl-glycinamide (GAR), producing 5-phospho-ribosyl-N-formylglycinamide (FGAR). Formate is provided by PurU via hydrolysis of 10-formyl-tetrahydrofolate. The protein is Formate-dependent phosphoribosylglycinamide formyltransferase of Azoarcus sp. (strain BH72).